The chain runs to 557 residues: Dihydroxy-acid dehydratase (557 aa).

Aspartate 78 is a binding site for Mg(2+). Residue cysteine 119 participates in [2Fe-2S] cluster binding. Residues aspartate 120 and lysine 121 each coordinate Mg(2+). Lysine 121 is subject to N6-carboxylysine. A [2Fe-2S] cluster-binding site is contributed by cysteine 192. Glutamate 443 lines the Mg(2+) pocket. Catalysis depends on serine 469, which acts as the Proton acceptor.

The protein belongs to the IlvD/Edd family. In terms of assembly, homodimer. Requires [2Fe-2S] cluster as cofactor. Mg(2+) is required as a cofactor.

The enzyme catalyses (2R)-2,3-dihydroxy-3-methylbutanoate = 3-methyl-2-oxobutanoate + H2O. It catalyses the reaction (2R,3R)-2,3-dihydroxy-3-methylpentanoate = (S)-3-methyl-2-oxopentanoate + H2O. It participates in amino-acid biosynthesis; L-isoleucine biosynthesis; L-isoleucine from 2-oxobutanoate: step 3/4. Its pathway is amino-acid biosynthesis; L-valine biosynthesis; L-valine from pyruvate: step 3/4. Functionally, functions in the biosynthesis of branched-chain amino acids. Catalyzes the dehydration of (2R,3R)-2,3-dihydroxy-3-methylpentanoate (2,3-dihydroxy-3-methylvalerate) into 2-oxo-3-methylpentanoate (2-oxo-3-methylvalerate) and of (2R)-2,3-dihydroxy-3-methylbutanoate (2,3-dihydroxyisovalerate) into 2-oxo-3-methylbutanoate (2-oxoisovalerate), the penultimate precursor to L-isoleucine and L-valine, respectively. The chain is Dihydroxy-acid dehydratase from Sulfurihydrogenibium sp. (strain YO3AOP1).